The following is a 252-amino-acid chain: Small ribosomal subunit protein uS2 (252 aa).

It belongs to the universal ribosomal protein uS2 family. As to quaternary structure, component of the small ribosomal subunit. Mature ribosomes consist of a small (40S) and a large (60S) subunit. The 40S subunit contains about 33 different proteins and 1 molecule of RNA (18S). The 60S subunit contains about 49 different proteins and 3 molecules of RNA (25S, 5.8S and 5S). Interacts with RPS21.

It is found in the cytoplasm. In terms of biological role, required for the assembly and/or stability of the 40S ribosomal subunit. Required for the processing of the 20S rRNA-precursor to mature 18S rRNA in a late step of the maturation of 40S ribosomal subunits. This chain is Small ribosomal subunit protein uS2, found in Encephalitozoon cuniculi (strain GB-M1) (Microsporidian parasite).